The sequence spans 496 residues: Glutamyl-tRNA(Gln) amidotransferase subunit A (496 aa).

Catalysis depends on charge relay system residues lysine 75 and serine 150. Serine 174 serves as the catalytic Acyl-ester intermediate.

The protein belongs to the amidase family. GatA subfamily. Heterotrimer of A, B and C subunits.

The catalysed reaction is L-glutamyl-tRNA(Gln) + L-glutamine + ATP + H2O = L-glutaminyl-tRNA(Gln) + L-glutamate + ADP + phosphate + H(+). Its function is as follows. Allows the formation of correctly charged Gln-tRNA(Gln) through the transamidation of misacylated Glu-tRNA(Gln) in organisms which lack glutaminyl-tRNA synthetase. The reaction takes place in the presence of glutamine and ATP through an activated gamma-phospho-Glu-tRNA(Gln). This chain is Glutamyl-tRNA(Gln) amidotransferase subunit A, found in Burkholderia pseudomallei (strain 1106a).